The sequence spans 118 residues: Large ribosomal subunit protein bL20 (118 aa).

Belongs to the bacterial ribosomal protein bL20 family.

Its function is as follows. Binds directly to 23S ribosomal RNA and is necessary for the in vitro assembly process of the 50S ribosomal subunit. It is not involved in the protein synthesizing functions of that subunit. The polypeptide is Large ribosomal subunit protein bL20 (Salmonella arizonae (strain ATCC BAA-731 / CDC346-86 / RSK2980)).